Consider the following 205-residue polypeptide: Large ribosomal subunit protein uL4 (205 aa).

Residues 43–95 form a disordered region; sequence RSGNRAQKDRAEVKHSTKKPWRQKGTGRARAGMTSSPLWRGGGRAFPNSPEEN. Residues 48 to 57 are compositionally biased toward basic and acidic residues; sequence AQKDRAEVKH. Over residues 58 to 69 the composition is skewed to basic residues; sequence STKKPWRQKGTG.

This sequence belongs to the universal ribosomal protein uL4 family. Part of the 50S ribosomal subunit.

Its function is as follows. One of the primary rRNA binding proteins, this protein initially binds near the 5'-end of the 23S rRNA. It is important during the early stages of 50S assembly. It makes multiple contacts with different domains of the 23S rRNA in the assembled 50S subunit and ribosome. Forms part of the polypeptide exit tunnel. This chain is Large ribosomal subunit protein uL4, found in Bordetella bronchiseptica (strain ATCC BAA-588 / NCTC 13252 / RB50) (Alcaligenes bronchisepticus).